The following is a 402-amino-acid chain: S-adenosylmethionine synthase (402 aa).

ATP is bound at residue His-16. Position 18 (Asp-18) interacts with Mg(2+). Residue Glu-44 participates in K(+) binding. L-methionine is bound by residues Glu-57 and Gln-103. The tract at residues 103–113 is flexible loop; it reads QSPDIAQGVDT. ATP contacts are provided by residues 178-180, 249-250, Asp-258, 264-265, Ala-281, and Lys-285; these read DGK, KF, and RK. Position 258 (Asp-258) interacts with L-methionine. Lys-289 lines the L-methionine pocket.

This sequence belongs to the AdoMet synthase family. Homotetramer; dimer of dimers. It depends on Mg(2+) as a cofactor. Requires K(+) as cofactor.

The protein localises to the cytoplasm. It carries out the reaction L-methionine + ATP + H2O = S-adenosyl-L-methionine + phosphate + diphosphate. It participates in amino-acid biosynthesis; S-adenosyl-L-methionine biosynthesis; S-adenosyl-L-methionine from L-methionine: step 1/1. In terms of biological role, catalyzes the formation of S-adenosylmethionine (AdoMet) from methionine and ATP. The overall synthetic reaction is composed of two sequential steps, AdoMet formation and the subsequent tripolyphosphate hydrolysis which occurs prior to release of AdoMet from the enzyme. The sequence is that of S-adenosylmethionine synthase from Mycolicibacterium gilvum (strain PYR-GCK) (Mycobacterium gilvum (strain PYR-GCK)).